A 288-amino-acid chain; its full sequence is tRNA (guanine-N(1)-)-methyltransferase (288 aa).

The interval 82 to 105 (ATDAVDTSDPGDSAAPDSSAPSGA) is disordered. Residues 89 to 105 (SDPGDSAAPDSSAPSGA) are compositionally biased toward low complexity. S-adenosyl-L-methionine contacts are provided by residues G137 and 162–167 (IGDYVL).

The protein belongs to the RNA methyltransferase TrmD family. Homodimer.

Its subcellular location is the cytoplasm. It catalyses the reaction guanosine(37) in tRNA + S-adenosyl-L-methionine = N(1)-methylguanosine(37) in tRNA + S-adenosyl-L-homocysteine + H(+). Specifically methylates guanosine-37 in various tRNAs. The protein is tRNA (guanine-N(1)-)-methyltransferase of Bifidobacterium longum (strain DJO10A).